A 54-amino-acid polypeptide reads, in one-letter code: Secreted virulence factor MC69 (54 aa).

Positions 1–16 are cleaved as a signal peptide; sequence MKAAFVLALCASLASA. An intrachain disulfide couples Cys-36 to Cys-46.

Belongs to the MC69 virulence factor family.

The protein resides in the secreted. Functionally, secreted protein required for appressorial penetration of intact host epidermal cells and for pathogenicity. The chain is Secreted virulence factor MC69 from Pyricularia oryzae (strain 70-15 / ATCC MYA-4617 / FGSC 8958) (Rice blast fungus).